Here is a 304-residue protein sequence, read N- to C-terminus: Acetyl-coenzyme A carboxylase carboxyl transferase subunit beta (304 aa).

One can recognise a CoA carboxyltransferase N-terminal domain in the interval 23–292 (VWTKCDSCGQ…PNPDAPREGE (270 aa)). Residues cysteine 27, cysteine 30, cysteine 46, and cysteine 49 each coordinate Zn(2+). The C4-type zinc-finger motif lies at 27–49 (CDSCGQVLYRAELERNLEVCPKC). The tract at residues 281 to 304 (PAPNPDAPREGEVVPPVPDQEPEA) is disordered. Over residues 295–304 (PPVPDQEPEA) the composition is skewed to pro residues.

This sequence belongs to the AccD/PCCB family. In terms of assembly, acetyl-CoA carboxylase is a heterohexamer composed of biotin carboxyl carrier protein (AccB), biotin carboxylase (AccC) and two subunits each of ACCase subunit alpha (AccA) and ACCase subunit beta (AccD). Requires Zn(2+) as cofactor.

It localises to the cytoplasm. It carries out the reaction N(6)-carboxybiotinyl-L-lysyl-[protein] + acetyl-CoA = N(6)-biotinyl-L-lysyl-[protein] + malonyl-CoA. The protein operates within lipid metabolism; malonyl-CoA biosynthesis; malonyl-CoA from acetyl-CoA: step 1/1. Component of the acetyl coenzyme A carboxylase (ACC) complex. Biotin carboxylase (BC) catalyzes the carboxylation of biotin on its carrier protein (BCCP) and then the CO(2) group is transferred by the transcarboxylase to acetyl-CoA to form malonyl-CoA. The chain is Acetyl-coenzyme A carboxylase carboxyl transferase subunit beta from Citrobacter koseri (strain ATCC BAA-895 / CDC 4225-83 / SGSC4696).